Reading from the N-terminus, the 1724-residue chain is Protein mono-ADP-ribosyltransferase PARP4 (1724 aa).

A BRCT domain is found at 1–94; it reads MVMGIFANCI…RLLDVKNYDP (94 aa). The short motif at 19 to 25 is the Nuclear localization signal element; sequence PQQQKKK. Residues 97-123 form a disordered region; sequence PLDITPPPDQKASSSEVKTEGLCPDSA. Residues T101 and T333 each carry the phosphothreonine modification. In terms of domain architecture, PARP alpha-helical spans 242-370; that stretch reads SEQLQALLLE…ETNLSKPNPP (129 aa). A PARP catalytic domain is found at 369 to 573; sequence PPSLAKYRAL…FSMPGDQIKD (205 aa). The region spanning 607–735 is the VIT domain; sequence SSTKAGLQDA…KVLIKITYIT (129 aa). Residues 876-1046 enclose the VWFA domain; sequence EVIICLDCSS…KQIEDQMTRL (171 aa). At S1236 the chain carries Phosphoserine. Residues 1237–1249 carry the Nuclear localization signal motif; it reads KRKHRKIPFSKRK. S1335 is subject to Phosphoserine. The disordered stretch occupies residues 1408–1452; that stretch reads SAQSAPLQHPGGFTTRPSAGTFPELDSPQLHFSLPTDPDPIRGFG. The residue at position 1476 (R1476) is an Asymmetric dimethylarginine. S1504 bears the Phosphoserine mark. Residues 1562–1724 form an interaction with the major vault protein region; that stretch reads VCIQHWQDAV…LHRVLHYSQG (163 aa).

The protein belongs to the ARTD/PARP family. Component of the vault ribonucleoprotein particle, at least composed of MVP, PARP4 and one or more vault RNAs (vRNAs). Interacts with TEP1. Widely expressed; the highest levels are in the kidney; also detected in heart, placenta, lung, liver, skeletal muscle, spleen, leukocytes and pancreas.

It is found in the cytoplasm. It localises to the nucleus. The protein resides in the cytoskeleton. Its subcellular location is the spindle. It carries out the reaction L-aspartyl-[protein] + NAD(+) = 4-O-(ADP-D-ribosyl)-L-aspartyl-[protein] + nicotinamide. It catalyses the reaction L-glutamyl-[protein] + NAD(+) = 5-O-(ADP-D-ribosyl)-L-glutamyl-[protein] + nicotinamide. Its function is as follows. Mono-ADP-ribosyltransferase that mediates mono-ADP-ribosylation of target proteins. This is Protein mono-ADP-ribosyltransferase PARP4 from Homo sapiens (Human).